A 1528-amino-acid chain; its full sequence is Intraflagellar transport protein 121 (1528 aa).

WD repeat units follow at residues 123 to 170 (SNRA…GSAP), 244 to 285 (SSMP…SSVS), 619 to 667 (PSLT…SEFL), and 759 to 798 (PELI…REDS). The segment at 914–933 (DSGLDVTASNSSQPSTQTSQ) is disordered. Positions 920 to 933 (TASNSSQPSTQTSQ) are enriched in low complexity.

The protein localises to the cell projection. Its subcellular location is the cilium. It localises to the flagellum. It is found in the cytoplasm. The protein resides in the cytoskeleton. The protein localises to the flagellum axoneme. Its subcellular location is the flagellum basal body. Its function is as follows. Component of the intraflagellar transport complex A (IFT-A) involved in flagellar assembly. This is Intraflagellar transport protein 121 from Giardia intestinalis (strain ATCC 50803 / WB clone C6) (Giardia lamblia).